The chain runs to 359 residues: MGEFKVDKFNIEDFFSGDLDIFNYSSGMPSILPDAVPCHSENLEINSYAVVVIYVLVTLLSLVGNSLVMLVILYNRSTCSVTDVYLLNLAIADLFFALTLPVWAASKVNGWTFGSTLCKIFSYVKEVTFYSSVLLLACISMDRYLAIVHATSTLIQKRHLVKFVCIAMWLLSVILALPILILRNPVKVNLSTLVCYEDVGNNTSRLRVVLRILPQTFGFLVPLLIMLFCYGFTLRTLFKAHMGQKHRAMRVIFAVVLVFLLCWLPYNLVLFTDTLMRTKLIKETCERRDDIDKALNATEILGFLHSCLNPIIYAFIGQKFRHGLLKIMATYGLVSKEFLAKEGRPSFVSSSSANTSTTL.

Residues 1 to 47 lie on the Extracellular side of the membrane; that stretch reads MGEFKVDKFNIEDFFSGDLDIFNYSSGMPSILPDAVPCHSENLEINS. Asparagine 23 carries N-linked (GlcNAc...) asparagine glycosylation. A helical membrane pass occupies residues 48 to 74; that stretch reads YAVVVIYVLVTLLSLVGNSLVMLVILY. Over 75–83 the chain is Cytoplasmic; sequence NRSTCSVTD. A helical membrane pass occupies residues 84 to 104; sequence VYLLNLAIADLFFALTLPVWA. The Extracellular portion of the chain corresponds to 105 to 119; it reads ASKVNGWTFGSTLCK. Cysteine 118 and cysteine 195 are joined by a disulfide. The helical transmembrane segment at 120-141 threads the bilayer; it reads IFSYVKEVTFYSSVLLLACISM. Over 142-162 the chain is Cytoplasmic; the sequence is DRYLAIVHATSTLIQKRHLVK. A helical transmembrane segment spans residues 163–182; sequence FVCIAMWLLSVILALPILIL. The Extracellular portion of the chain corresponds to 183 to 207; the sequence is RNPVKVNLSTLVCYEDVGNNTSRLR. Residues 208 to 230 form a helical membrane-spanning segment; it reads VVLRILPQTFGFLVPLLIMLFCY. Residues 231–250 are Cytoplasmic-facing; the sequence is GFTLRTLFKAHMGQKHRAMR. Residues 251 to 272 form a helical membrane-spanning segment; sequence VIFAVVLVFLLCWLPYNLVLFT. Topologically, residues 273–293 are extracellular; the sequence is DTLMRTKLIKETCERRDDIDK. A helical membrane pass occupies residues 294–314; that stretch reads ALNATEILGFLHSCLNPIIYA. Residues 315 to 359 are Cytoplasmic-facing; the sequence is FIGQKFRHGLLKIMATYGLVSKEFLAKEGRPSFVSSSSANTSTTL.

The protein belongs to the G-protein coupled receptor 1 family. In terms of assembly, interacts with IL8. Interacts with GNAI2. Post-translationally, phosphorylated upon ligand binding; which is required for desensitization.

The protein localises to the cell membrane. In terms of biological role, receptor for interleukin-8 which is a powerful neutrophil chemotactic factor. Binding of IL-8 to the receptor causes activation of neutrophils. This response is mediated via a G-protein that activates a phosphatidylinositol-calcium second messenger system. Binds to IL-8 with high affinity. Also binds with high affinity to CXCL3, GRO/MGSA and NAP-2. This Mus musculus (Mouse) protein is C-X-C chemokine receptor type 2 (Cxcr2).